A 60-amino-acid polypeptide reads, in one-letter code: uncharacterized protein (60 aa).

This is an uncharacterized protein from Lepidoptera (butterflies and moths).